A 443-amino-acid polypeptide reads, in one-letter code: Tol-Pal system protein TolB (443 aa).

The N-terminal stretch at Met1–Ala24 is a signal peptide. Residues Leu424–Arg443 form a disordered region.

This sequence belongs to the TolB family. The Tol-Pal system is composed of five core proteins: the inner membrane proteins TolA, TolQ and TolR, the periplasmic protein TolB and the outer membrane protein Pal. They form a network linking the inner and outer membranes and the peptidoglycan layer.

The protein resides in the periplasm. Part of the Tol-Pal system, which plays a role in outer membrane invagination during cell division and is important for maintaining outer membrane integrity. The sequence is that of Tol-Pal system protein TolB from Roseobacter denitrificans (strain ATCC 33942 / OCh 114) (Erythrobacter sp. (strain OCh 114)).